The chain runs to 62 residues: Sperm protamine P1 (62 aa).

Residues 1 to 62 form a disordered region; sequence MARYRHSRSR…RYSRRRRRRY (62 aa).

Belongs to the protamine P1 family. In terms of tissue distribution, testis.

The protein resides in the nucleus. Its subcellular location is the chromosome. In terms of biological role, protamines substitute for histones in the chromatin of sperm during the haploid phase of spermatogenesis. They compact sperm DNA into a highly condensed, stable and inactive complex. The chain is Sperm protamine P1 (PRM1) from Bettongia penicillata (Brush-tailed bettong).